Reading from the N-terminus, the 426-residue chain is Serine--tRNA ligase (426 aa).

Residue 233-235 coordinates L-serine; that stretch reads TAE. An ATP-binding site is contributed by 264–266; it reads RSE. E287 contacts L-serine. ATP is bound at residue 351–354; sequence EISS. Position 385 (S385) interacts with L-serine.

Belongs to the class-II aminoacyl-tRNA synthetase family. Type-1 seryl-tRNA synthetase subfamily. As to quaternary structure, homodimer. The tRNA molecule binds across the dimer.

Its subcellular location is the cytoplasm. It carries out the reaction tRNA(Ser) + L-serine + ATP = L-seryl-tRNA(Ser) + AMP + diphosphate + H(+). The catalysed reaction is tRNA(Sec) + L-serine + ATP = L-seryl-tRNA(Sec) + AMP + diphosphate + H(+). It functions in the pathway aminoacyl-tRNA biosynthesis; selenocysteinyl-tRNA(Sec) biosynthesis; L-seryl-tRNA(Sec) from L-serine and tRNA(Sec): step 1/1. In terms of biological role, catalyzes the attachment of serine to tRNA(Ser). Is also able to aminoacylate tRNA(Sec) with serine, to form the misacylated tRNA L-seryl-tRNA(Sec), which will be further converted into selenocysteinyl-tRNA(Sec). The sequence is that of Serine--tRNA ligase from Brachyspira hyodysenteriae (strain ATCC 49526 / WA1).